The sequence spans 440 residues: UDP-N-acetylglucosamine 1-carboxyvinyltransferase 1 (440 aa).

22 to 23 lines the phosphoenolpyruvate pocket; that stretch reads KN. R93 is a UDP-N-acetyl-alpha-D-glucosamine binding site. C117 acts as the Proton donor in catalysis. C117 is modified (2-(S-cysteinyl)pyruvic acid O-phosphothioketal). Residues 122-126, D306, and V328 contribute to the UDP-N-acetyl-alpha-D-glucosamine site; that span reads RPIDQ.

It belongs to the EPSP synthase family. MurA subfamily.

The protein localises to the cytoplasm. The enzyme catalyses phosphoenolpyruvate + UDP-N-acetyl-alpha-D-glucosamine = UDP-N-acetyl-3-O-(1-carboxyvinyl)-alpha-D-glucosamine + phosphate. It functions in the pathway cell wall biogenesis; peptidoglycan biosynthesis. Cell wall formation. Adds enolpyruvyl to UDP-N-acetylglucosamine. The polypeptide is UDP-N-acetylglucosamine 1-carboxyvinyltransferase 1 (Halalkalibacterium halodurans (strain ATCC BAA-125 / DSM 18197 / FERM 7344 / JCM 9153 / C-125) (Bacillus halodurans)).